The chain runs to 111 residues: Large ribosomal subunit protein uL24 (111 aa).

Basic and acidic residues predominate over residues 48–65; that stretch reads EKPSRSNREGGRTEREAP. A disordered region spans residues 48–111; it reads EKPSRSNREG…AKTTGEELDD (64 aa). A compositionally biased stretch (polar residues) spans 69–80; that stretch reads SNVNPIDSNGES. Basic and acidic residues predominate over residues 86-95; that stretch reads KKVEDPDTGR.

It belongs to the universal ribosomal protein uL24 family. In terms of assembly, part of the 50S ribosomal subunit.

Functionally, one of two assembly initiator proteins, it binds directly to the 5'-end of the 23S rRNA, where it nucleates assembly of the 50S subunit. One of the proteins that surrounds the polypeptide exit tunnel on the outside of the subunit. The chain is Large ribosomal subunit protein uL24 from Salinibacter ruber (strain DSM 13855 / M31).